A 291-amino-acid chain; its full sequence is tRNA pseudouridine synthase-like 1 (291 aa).

The active-site Nucleophile is the aspartate 66. Position 130 (tyrosine 130) interacts with substrate.

It belongs to the tRNA pseudouridine synthase TruA family.

It catalyses the reaction a uridine in tRNA = a pseudouridine in tRNA. This Mus musculus (Mouse) protein is tRNA pseudouridine synthase-like 1 (Pusl1).